A 338-amino-acid polypeptide reads, in one-letter code: 26S proteasome regulatory subunit RPN8 (338 aa).

N-acetylserine is present on S2. The MPN domain maps to 8–143 (VTIAPLVLLS…TDAYVAIEQV (136 aa)). Residues 301 to 326 (IQEQRVKDKQSKVSDDSESESGDKEA) are compositionally biased toward basic and acidic residues. The disordered stretch occupies residues 301–338 (IQEQRVKDKQSKVSDDSESESGDKEATAPLIQRKNKKN). Phosphoserine occurs at positions 314, 317, and 319. A Phosphothreonine modification is found at T327.

The protein belongs to the peptidase M67A family. N-acetylated by NAT1.

Its function is as follows. Acts as a regulatory subunit of the 26S proteasome which is involved in the ATP-dependent degradation of ubiquitinated proteins. This chain is 26S proteasome regulatory subunit RPN8 (RPN8), found in Saccharomyces cerevisiae (strain ATCC 204508 / S288c) (Baker's yeast).